Reading from the N-terminus, the 553-residue chain is Putative transport protein ASA_0825 (553 aa).

5 helical membrane passes run 4–24, 29–49, 65–85, 95–115, and 158–178; these read IALSISMLSLVAVLGLWLGNW, VGLGIGGVLFGGIIVGHFAGV, FGLILFVYTIGIQVGPGFFSS, GFAALLVILGCVVAAGLHQLF, and MGYAVAYPFGICGILLTMWLV. 2 RCK C-terminal domains span residues 191-276 and 279-361; these read DLFE…VLGE and ETSL…VVGN. The next 6 helical transmembrane spans lie at 371-391, 403-425, 439-459, 465-485, 493-513, and 533-553; these read MLPVFIGIGLGVLLGSIPFYL, AGGPLVVALILSRIGSIGKLYWF, IVLFLAVVGFKSGAGFVDTLI, AWMMYGMAITLIPLLVVGVLA, YLTLCGLLAGSMTDPPALAFA, and LVMFLRIISPQLLAILLWAGV.

This sequence belongs to the AAE transporter (TC 2.A.81) family. YidE subfamily.

It localises to the cell membrane. The protein is Putative transport protein ASA_0825 of Aeromonas salmonicida (strain A449).